A 569-amino-acid polypeptide reads, in one-letter code: Probable santalene synthase (569 aa).

5 residues coordinate (2E)-geranyl diphosphate: Arg-284, Asp-321, Asp-325, Arg-460, and Asn-463. Mg(2+)-binding residues include Asp-321 and Asp-325. The DDXXD motif motif lies at 321-325 (DDAYD). 3 residues coordinate Mg(2+): Asn-463, Thr-467, and Glu-471.

The protein belongs to the terpene synthase family. Tpsb subfamily. It depends on Mg(2+) as a cofactor. The cofactor is Mn(2+).

Catalyzes the formation of santalene. The chain is Probable santalene synthase (SSY) from Santalum murrayanum (Bitter quandong).